The following is a 633-amino-acid chain: MGNQMSVPLRPGDQEHDPGADTCKVTSDNECVQNGNPVVLSTRVIQHYEEVDLGISSSKDNVATSSPKTMEAQAVGDASGKNLGKEAKTKAPAARSHFFLTLSRPVPGRPGDQGTDSSAASGRFDVSPSAAPENKDPSEHGALPVAAAPGQAPDKTPGCPEAKQQTLPATGPLAPSPPESQAEAPAQDKDFGFLNRFFKLDKGRESAPVNSQPKEAKGSEDPEQATEAPAVPGNPHGVSAGEDIVDSEQRGQDVDTLSYSVPGDPEVPGTTKEDPQVVDTTENSSSIMSFFKTLVSPNKTETKKDPEDTKATKADSVCDGHAAGQKMSETQAKSKKKRLDSPRLGLSFRKLFRHKDTENSPTTSANLKSDKANFTPQETRGKTKATKSCSPPPPPPEPTSEGRDSGKEKAGPTSLPLGKLFWKKSVKEDTLSTGAEENAVCESPVETVRLEEVESSLQTVDLSEETQPEPTDVKVKEESKPRKTPLMAFLRQMSVRSSEGIPRSEESNVKDSSCQTSNSVEKTPSPPEPEPAGTAQKNKETSSSKDKKSVDKKSATENSKQKNGKQEVREPAPCVQPPTVEANAMQTGDKTPKKSEKRRQSLGGFLKGLGPKRMSDAQVQTDPVSIGPVGKSK.

Disordered regions lie at residues 1 to 34 and 57 to 422; these read MGNQ…CVQN and SSKD…KLFW. 2 stretches are compositionally biased toward polar residues: residues 24 to 34 and 57 to 68; these read KVTSDNECVQN and SSKDNVATSSPK. A Phosphoserine modification is found at Ser127. Residues 278–288 are compositionally biased toward polar residues; it reads VDTTENSSSIM. Positions 300–318 are enriched in basic and acidic residues; sequence TETKKDPEDTKATKADSVC. Ser328 carries the phosphoserine modification. Thr330 carries the post-translational modification Phosphothreonine. Residues 359-378 are compositionally biased toward polar residues; the sequence is NSPTTSANLKSDKANFTPQE. A Phosphoserine modification is found at Ser360. Basic and acidic residues predominate over residues 400–410; sequence SEGRDSGKEKA. 2 positions are modified to phosphoserine: Ser425 and Ser443. The disordered stretch occupies residues 454-633; it reads ESSLQTVDLS…VSIGPVGKSK (180 aa). The segment covering 471–481 has biased composition (basic and acidic residues); sequence TDVKVKEESKP. The span at 510 to 522 shows a compositional bias: polar residues; it reads KDSSCQTSNSVEK. Thr523 carries the phosphothreonine modification. Ser525 is modified (phosphoserine). Positions 537–555 are enriched in basic and acidic residues; it reads KNKETSSSKDKKSVDKKSA. Phosphoserine is present on residues Ser601 and Ser615. The interval 614-633 is interacts with DYNLL1 AND DYNLL2; the sequence is MSDAQVQTDPVSIGPVGKSK.

Homodimer. Interacts with DYNLL1 and DYNLL2. In terms of tissue distribution, highly expressed in the brain and, more specifically, in oligodendrocytes. Expressed in the Schwann cells (at protein level).

It is found in the cytoplasm. In terms of biological role, required for myelination. The sequence is that of Breast carcinoma-amplified sequence 1 homolog (Bcas1) from Mus musculus (Mouse).